The chain runs to 637 residues: uncharacterized protein (637 aa).

Residues 7–34 (CDLCRLKKIKCSRGQPRCQTCTLFQADC) constitute a DNA-binding region (zn(2)-C6 fungal-type). A C2H2-type; degenerate zinc finger spans residues 304–327 (SLCRTLCGQACLMAQQLNLHRKQS).

The protein localises to the nucleus. This is an uncharacterized protein from Schizosaccharomyces pombe (strain 972 / ATCC 24843) (Fission yeast).